Here is a 798-residue protein sequence, read N- to C-terminus: Protocadherin beta-14 (798 aa).

The N-terminal stretch at 1–26 (MEIRGALDLRKRQVLIFLVLLGLSRA) is a signal peptide. The Extracellular portion of the chain corresponds to 27-686 (GTESAHYSVA…APAQAQADSL (660 aa)). 5 Cadherin domains span residues 35 to 133 (VAEE…SPTF), 138 to 242 (ILIK…APEF), 247 to 347 (YEVQ…PPEV), 352 to 451 (ITKR…APAF), and 456 to 561 (YTLF…SPFV). Cysteine 96 and cysteine 102 are joined by a disulfide. Asparagine 169 carries an N-linked (GlcNAc...) asparagine glycan. Asparagine 359, asparagine 418, and asparagine 436 each carry an N-linked (GlcNAc...) asparagine glycan. Residue asparagine 567 is glycosylated (N-linked (GlcNAc...) asparagine). The region spanning 568–671 (GSAPCTELVP…LVDGFSQPYL (104 aa)) is the Cadherin 6 domain. A helical membrane pass occupies residues 687–711 (TVYLVVALASVSSLFLFSVLLFVAV). The Cytoplasmic segment spans residues 712–798 (RLCRRSRAAS…FRNSFGLNIQ (87 aa)).

The protein resides in the cell membrane. In terms of biological role, potential calcium-dependent cell-adhesion protein. May be involved in the establishment and maintenance of specific neuronal connections in the brain. This chain is Protocadherin beta-14 (PCDHB14), found in Pan troglodytes (Chimpanzee).